Here is a 276-residue protein sequence, read N- to C-terminus: NADPH-dependent 7-cyano-7-deazaguanine reductase (276 aa).

83 to 85 (VES) contributes to the substrate binding site. 85–86 (SK) provides a ligand contact to NADPH. Cys184 acts as the Thioimide intermediate in catalysis. Asp191 functions as the Proton donor in the catalytic mechanism. Substrate is bound at residue 223–224 (HE). 252–253 (RG) is a binding site for NADPH.

Belongs to the GTP cyclohydrolase I family. QueF type 2 subfamily. As to quaternary structure, homodimer.

Its subcellular location is the cytoplasm. It carries out the reaction 7-aminomethyl-7-carbaguanine + 2 NADP(+) = 7-cyano-7-deazaguanine + 2 NADPH + 3 H(+). Its pathway is tRNA modification; tRNA-queuosine biosynthesis. Its function is as follows. Catalyzes the NADPH-dependent reduction of 7-cyano-7-deazaguanine (preQ0) to 7-aminomethyl-7-deazaguanine (preQ1). This chain is NADPH-dependent 7-cyano-7-deazaguanine reductase, found in Azotobacter vinelandii (strain DJ / ATCC BAA-1303).